We begin with the raw amino-acid sequence, 382 residues long: Kelch domain-containing protein 3 (382 aa).

5 Kelch repeats span residues 25–77 (RVYS…PYMR), 88–138 (TVFL…VLGK), 139–189 (TMYI…TMLG), 191–249 (HMYV…GYNG), and 251–301 (LYIF…IVGD).

In terms of assembly, component of a CRL2(KLHDC3) complex, also named ECS(KLHDC3) complex, composed of CUL2, Elongin BC (ELOB and ELOC), RBX1 and substrate-specific adapter KLHDC3. May form oligomers as a KLHDC3-ELOB-ELOC complex; this interaction is likely autoinhibitory for the E3 ligase complex.

The protein resides in the cytoplasm. Its pathway is protein modification; protein ubiquitination. Functionally, substrate-recognition component of a Cul2-RING (CRL2) E3 ubiquitin-protein ligase complex of the DesCEND (destruction via C-end degrons) pathway, which recognizes a C-degron located at the extreme C terminus of target proteins, leading to their ubiquitination and degradation. The C-degron recognized by the DesCEND pathway is usually a motif of less than ten residues and can be present in full-length proteins, truncated proteins or proteolytically cleaved forms. The CRL2(KLHDC3) complex specifically recognizes proteins with a glycine (Gly) at the C-terminus, leading to their ubiquitination and degradation: recognizes the C-terminal -Arg-(Xaa)n-Arg-Gly, -Arg-(Xaa)n-Lys-Gly, and -Arg-(Xaa)n-Gln-Gly degrons. The CRL2(KLHDC3) complex mediates ubiquitination and degradation of truncated SELENOV and SEPHS2 selenoproteins produced by failed UGA/Sec decoding, which end with a glycine. May be involved in meiotic recombination process. This chain is Kelch domain-containing protein 3, found in Bos taurus (Bovine).